We begin with the raw amino-acid sequence, 345 residues long: Fructose-1,6-bisphosphatase class 1 (345 aa).

The Mg(2+) site is built by E90, D109, L111, and D112. Residues 112 to 115 (DGSS) and N200 contribute to the substrate site. E272 lines the Mg(2+) pocket.

This sequence belongs to the FBPase class 1 family. In terms of assembly, homotetramer. Mg(2+) serves as cofactor.

The protein localises to the cytoplasm. It catalyses the reaction beta-D-fructose 1,6-bisphosphate + H2O = beta-D-fructose 6-phosphate + phosphate. It participates in carbohydrate biosynthesis; gluconeogenesis. The chain is Fructose-1,6-bisphosphatase class 1 from Bradyrhizobium diazoefficiens (strain JCM 10833 / BCRC 13528 / IAM 13628 / NBRC 14792 / USDA 110).